We begin with the raw amino-acid sequence, 461 residues long: Serine incorporator 5 (461 aa).

Residues methionine 1–arginine 36 lie on the Extracellular side of the membrane. The helical transmembrane segment at phenylalanine 37–serine 57 threads the bilayer. Over valine 58–serine 90 the chain is Cytoplasmic. A helical transmembrane segment spans residues alanine 91–leucine 111. Residues lysine 112–asparagine 125 lie on the Extracellular side of the membrane. The N-linked (GlcNAc...) asparagine glycan is linked to asparagine 114. The helical transmembrane segment at glycine 126–proline 146 threads the bilayer. The Cytoplasmic portion of the chain corresponds to aspartate 147–tyrosine 157. Residues valine 158–alanine 178 form a helical membrane-spanning segment. Over histidine 179–serine 200 the chain is Extracellular. Residue asparagine 184 is glycosylated (N-linked (GlcNAc...) asparagine). Residues leucine 201–tyrosine 221 traverse the membrane as a helical segment. The Cytoplasmic portion of the chain corresponds to threonine 222–lysine 231. A helical transmembrane segment spans residues isoleucine 232–cysteine 252. Residues valine 253 to serine 260 lie on the Extracellular side of the membrane. The chain crosses the membrane as a helical span at residues glycine 261 to threonine 281. The Cytoplasmic segment spans residues serine 282–asparagine 312. Residues methionine 313–serine 333 form a helical membrane-spanning segment. The Extracellular segment spans residues threonine 334 to serine 392. A helical membrane pass occupies residues tyrosine 393–phenylalanine 413. The Cytoplasmic portion of the chain corresponds to histidine 414 to threonine 422. A helical membrane pass occupies residues phenylalanine 423–leucine 443. Residues tyrosine 444–valine 461 lie on the Extracellular side of the membrane.

This sequence belongs to the TDE1 family.

The protein resides in the cell membrane. It carries out the reaction a 1,2-diacyl-sn-glycero-3-phospho-L-serine(in) = a 1,2-diacyl-sn-glycero-3-phospho-L-serine(out). The enzyme catalyses a 1,2-diacyl-sn-glycero-3-phosphocholine(in) = a 1,2-diacyl-sn-glycero-3-phosphocholine(out). The catalysed reaction is a 1,2-diacyl-sn-glycero-3-phosphoethanolamine(in) = a 1,2-diacyl-sn-glycero-3-phosphoethanolamine(out). In terms of biological role, restriction factor required to restrict infectivity of gammaretroviruses: acts by inhibiting an early step of viral infection. Impairs the penetration of the viral particle into the cytoplasm. Non-ATP-dependent, non-specific lipid transporter for phosphatidylserine, phosphatidylcholine, and phosphatidylethanolamine. Functions as a scramblase that flips lipids in both directions across the membrane. Phospholipid scrambling results in gammaretroviral surface exposure of phosphatidylserine and loss of membrane asymmetry, which leads to loss of infectivity. Enhances the incorporation of serine into phosphatidylserine and sphingolipids. May play a role in providing serine molecules for the formation of myelin glycosphingolipids in oligodendrocytes. The protein is Serine incorporator 5 (Serinc5) of Mus musculus (Mouse).